The primary structure comprises 146 residues: Horcolin (146 aa).

The disordered stretch occupies residues 1-21 (MSKPVKIGPWGGNGGSERDVQ). Residues 4 to 146 (PVKIGPWGGN…LDAIGFYITP (143 aa)) enclose the Jacalin-type lectin domain.

Belongs to the jacalin lectin family.

Its subcellular location is the secreted. It is found in the extracellular space. The protein localises to the apoplast. Mannose-specific lectin. Has a weak agglutinating activity against rabbit erythrocytes. This Hordeum vulgare (Barley) protein is Horcolin.